Reading from the N-terminus, the 212-residue chain is Putative 3-methyladenine DNA glycosylase (212 aa).

The protein belongs to the DNA glycosylase MPG family.

The polypeptide is Putative 3-methyladenine DNA glycosylase (Psychrobacter cryohalolentis (strain ATCC BAA-1226 / DSM 17306 / VKM B-2378 / K5)).